A 371-amino-acid chain; its full sequence is tRNA-specific 2-thiouridylase MnmA (371 aa).

Residues 7 to 14 and leucine 33 contribute to the ATP site; that span reads AMSGGVDS. Catalysis depends on cysteine 101, which acts as the Nucleophile. Cysteine 101 and cysteine 213 are oxidised to a cystine. Position 125 (glycine 125) interacts with ATP. The interval 163 to 165 is interaction with tRNA; sequence KDQ. Cysteine 213 functions as the Cysteine persulfide intermediate in the catalytic mechanism.

This sequence belongs to the MnmA/TRMU family.

The protein localises to the cytoplasm. It carries out the reaction S-sulfanyl-L-cysteinyl-[protein] + uridine(34) in tRNA + AH2 + ATP = 2-thiouridine(34) in tRNA + L-cysteinyl-[protein] + A + AMP + diphosphate + H(+). Catalyzes the 2-thiolation of uridine at the wobble position (U34) of tRNA, leading to the formation of s(2)U34. The polypeptide is tRNA-specific 2-thiouridylase MnmA (Roseiflexus castenholzii (strain DSM 13941 / HLO8)).